The chain runs to 248 residues: 3-deoxy-manno-octulosonate cytidylyltransferase (248 aa).

The protein belongs to the KdsB family.

It localises to the cytoplasm. The catalysed reaction is 3-deoxy-alpha-D-manno-oct-2-ulosonate + CTP = CMP-3-deoxy-beta-D-manno-octulosonate + diphosphate. It participates in nucleotide-sugar biosynthesis; CMP-3-deoxy-D-manno-octulosonate biosynthesis; CMP-3-deoxy-D-manno-octulosonate from 3-deoxy-D-manno-octulosonate and CTP: step 1/1. The protein operates within bacterial outer membrane biogenesis; lipopolysaccharide biosynthesis. Its function is as follows. Activates KDO (a required 8-carbon sugar) for incorporation into bacterial lipopolysaccharide in Gram-negative bacteria. In Escherichia fergusonii (strain ATCC 35469 / DSM 13698 / CCUG 18766 / IAM 14443 / JCM 21226 / LMG 7866 / NBRC 102419 / NCTC 12128 / CDC 0568-73), this protein is 3-deoxy-manno-octulosonate cytidylyltransferase.